The primary structure comprises 208 residues: Uracil phosphoribosyltransferase (208 aa).

5-phospho-alpha-D-ribose 1-diphosphate-binding positions include Arg-78, Arg-103, and 130–138; that span reads DPMLATGGS. Uracil is bound by residues Ile-193 and 198-200; that span reads GDA. Asp-199 contributes to the 5-phospho-alpha-D-ribose 1-diphosphate binding site.

This sequence belongs to the UPRTase family. The cofactor is Mg(2+).

The catalysed reaction is UMP + diphosphate = 5-phospho-alpha-D-ribose 1-diphosphate + uracil. The protein operates within pyrimidine metabolism; UMP biosynthesis via salvage pathway; UMP from uracil: step 1/1. With respect to regulation, allosterically activated by GTP. Catalyzes the conversion of uracil and 5-phospho-alpha-D-ribose 1-diphosphate (PRPP) to UMP and diphosphate. This is Uracil phosphoribosyltransferase from Salmonella agona (strain SL483).